Consider the following 396-residue polypeptide: Flavohemoprotein (396 aa).

Residues 1 to 136 enclose the Globin domain; sequence MLDAQTIATV…LANVFINREA (136 aa). Residue His85 coordinates heme b. Catalysis depends on charge relay system residues Tyr95 and Glu135. A reductase region spans residues 147–396; that stretch reads GGWEGTRDFR…YECFGPHKVL (250 aa). One can recognise an FAD-binding FR-type domain in the interval 150 to 255; the sequence is EGTRDFRIVA…VAPAGDFFMA (106 aa). FAD-binding positions include Tyr188 and 204–207; that span reads RQYS. 268–273 provides a ligand contact to NADP(+); that stretch reads GVGQTP. 389–392 serves as a coordination point for FAD; the sequence is CFGP.

The protein belongs to the globin family. Two-domain flavohemoproteins subfamily. This sequence in the C-terminal section; belongs to the flavoprotein pyridine nucleotide cytochrome reductase family. It depends on heme b as a cofactor. Requires FAD as cofactor.

It catalyses the reaction 2 nitric oxide + NADPH + 2 O2 = 2 nitrate + NADP(+) + H(+). The catalysed reaction is 2 nitric oxide + NADH + 2 O2 = 2 nitrate + NAD(+) + H(+). In terms of biological role, is involved in NO detoxification in an aerobic process, termed nitric oxide dioxygenase (NOD) reaction that utilizes O(2) and NAD(P)H to convert NO to nitrate, which protects the bacterium from various noxious nitrogen compounds. Therefore, plays a central role in the inducible response to nitrosative stress. The sequence is that of Flavohemoprotein from Shigella flexneri.